Consider the following 400-residue polypeptide: Phosphoribosylamine--glycine ligase (400 aa).

The ATP-grasp domain maps to Lys99–Arg303. Residue Ile125 to Ser186 participates in ATP binding. 2 residues coordinate Mg(2+): Glu273 and Asn275.

The protein belongs to the GARS family. Mg(2+) is required as a cofactor. Mn(2+) serves as cofactor.

It carries out the reaction 5-phospho-beta-D-ribosylamine + glycine + ATP = N(1)-(5-phospho-beta-D-ribosyl)glycinamide + ADP + phosphate + H(+). Its pathway is purine metabolism; IMP biosynthesis via de novo pathway; N(1)-(5-phospho-D-ribosyl)glycinamide from 5-phospho-alpha-D-ribose 1-diphosphate: step 2/2. The sequence is that of Phosphoribosylamine--glycine ligase from Thermotoga maritima (strain ATCC 43589 / DSM 3109 / JCM 10099 / NBRC 100826 / MSB8).